A 127-amino-acid polypeptide reads, in one-letter code: Large ribosomal subunit protein uL18 (127 aa).

It belongs to the universal ribosomal protein uL18 family. In terms of assembly, part of the 50S ribosomal subunit; part of the 5S rRNA/L5/L18/L25 subcomplex. Contacts the 5S and 23S rRNAs.

Its function is as follows. This is one of the proteins that bind and probably mediate the attachment of the 5S RNA into the large ribosomal subunit, where it forms part of the central protuberance. The protein is Large ribosomal subunit protein uL18 of Streptomyces coelicolor (strain ATCC BAA-471 / A3(2) / M145).